Reading from the N-terminus, the 527-residue chain is Amine oxidase [flavin-containing] A (527 aa).

The residue at position 1 (methionine 1) is an N-acetylmethionine. Topologically, residues 1-497 (MASREKTSIE…HTFWERNLPS (497 aa)) are cytoplasmic. At serine 383 the chain carries Phosphoserine. Cysteine 406 bears the S-8alpha-FAD cysteine mark. The chain crosses the membrane as a helical; Anchor for type IV membrane protein span at residues 498-518 (VTGLLKLIGFTTSVTALWIVA). Residues 519–527 (YKFRLLRRS) lie on the Mitochondrial intermembrane side of the membrane. Positions 520–522 (KFR) are interaction with membrane phospholipid headgroups.

It belongs to the flavin monoamine oxidase family. As to quaternary structure, monomer, homo- or heterodimer (containing two subunits of similar size). Each subunit contains a covalently bound flavin. Enzymatically active as monomer. Requires FAD as cofactor.

The protein localises to the mitochondrion outer membrane. The enzyme catalyses a secondary aliphatic amine + O2 + H2O = a primary amine + an aldehyde + H2O2. The catalysed reaction is a primary methyl amine + O2 + H2O = an aldehyde + H2O2 + NH4(+). It carries out the reaction (R)-adrenaline + O2 + H2O = (R)-3,4-dihydroxymandelaldehyde + methylamine + H2O2. It catalyses the reaction dopamine + O2 + H2O = 3,4-dihydroxyphenylacetaldehyde + H2O2 + NH4(+). The enzyme catalyses tyramine + O2 + H2O = (4-hydroxyphenyl)acetaldehyde + H2O2 + NH4(+). The catalysed reaction is (R)-noradrenaline + O2 + H2O = (R)-3,4-dihydroxymandelaldehyde + H2O2 + NH4(+). It carries out the reaction serotonin + O2 + H2O = (5-hydroxyindol-3-yl)acetaldehyde + H2O2 + NH4(+). It catalyses the reaction kynuramine + O2 + H2O = 3-(2-aminophenyl)-3-oxopropanal + H2O2 + NH4(+). The enzyme catalyses tryptamine + O2 + H2O = indole-3-acetaldehyde + H2O2 + NH4(+). The catalysed reaction is 2-phenylethylamine + O2 + H2O = 2-phenylacetaldehyde + H2O2 + NH4(+). Catalyzes the oxidative deamination of primary and some secondary amine such as neurotransmitters, with concomitant reduction of oxygen to hydrogen peroxide and has important functions in the metabolism of neuroactive and vasoactive amines in the central nervous system and peripheral tissues. Preferentially oxidizes serotonin. Also catalyzes the oxidative deamination of kynuramine to 3-(2-aminophenyl)-3-oxopropanal that can spontaneously condense to 4-hydroxyquinoline. This Canis lupus familiaris (Dog) protein is Amine oxidase [flavin-containing] A.